A 153-amino-acid chain; its full sequence is Putative ATP synthase subunit f, mitochondrial (153 aa).

Belongs to the ATPase F chain family. In terms of assembly, subunit of the F-type ATPase which has 2 components, CF(1) - the catalytic core - and CF(0) - the membrane proton channel.

It is found in the mitochondrion membrane. Functionally, mitochondrial membrane ATP synthase (F(1)F(0) ATP synthase or Complex V) produces ATP from ADP in the presence of a proton gradient across the membrane which is generated by electron transport complexes of the respiratory chain. F-type ATPases consist of two structural domains, F(1) - containing the extramembraneous catalytic core and F(0) - containing the membrane proton channel, linked together by a central stalk and a peripheral stalk. During catalysis, ATP synthesis in the catalytic domain of F(1) is coupled via a rotary mechanism of the central stalk subunits to proton translocation. Part of the complex F(0) domain. Minor subunit located with subunit a in the membrane. The sequence is that of Putative ATP synthase subunit f, mitochondrial from Caenorhabditis elegans.